A 306-amino-acid chain; its full sequence is Ornithine carbamoyltransferase 1, anabolic (306 aa).

Residues S53 to T56, Q80, R104, and H131 to Q134 each bind carbamoyl phosphate. L-ornithine-binding positions include N162, D219, and S223–M224. Carbamoyl phosphate is bound by residues C259–L260 and R287.

It belongs to the aspartate/ornithine carbamoyltransferase superfamily. OTCase family. In terms of assembly, homotrimer.

The protein resides in the cytoplasm. It carries out the reaction carbamoyl phosphate + L-ornithine = L-citrulline + phosphate + H(+). It functions in the pathway amino-acid biosynthesis; L-arginine biosynthesis; L-arginine from L-ornithine and carbamoyl phosphate: step 1/3. With respect to regulation, reversibly inhibited by inhibited by phaseolotoxin and octicidine. Reversibly catalyzes the transfer of the carbamoyl group from carbamoyl phosphate (CP) to the N(epsilon) atom of ornithine (ORN) to produce L-citrulline, which is a substrate for argininosuccinate synthetase, the enzyme involved in the final step in arginine biosynthesis. The chain is Ornithine carbamoyltransferase 1, anabolic from Pseudomonas savastanoi pv. phaseolicola (Pseudomonas syringae pv. phaseolicola).